The following is a 286-amino-acid chain: Release factor glutamine methyltransferase (286 aa).

Residues aspartate 136 and asparagine 179 each contribute to the S-adenosyl-L-methionine site. 179–182 (NPPY) contacts substrate.

It belongs to the protein N5-glutamine methyltransferase family. PrmC subfamily.

The enzyme catalyses L-glutaminyl-[peptide chain release factor] + S-adenosyl-L-methionine = N(5)-methyl-L-glutaminyl-[peptide chain release factor] + S-adenosyl-L-homocysteine + H(+). In terms of biological role, methylates the class 1 translation termination release factors RF1/PrfA and RF2/PrfB on the glutamine residue of the universally conserved GGQ motif. The protein is Release factor glutamine methyltransferase of Borreliella burgdorferi (strain ATCC 35210 / DSM 4680 / CIP 102532 / B31) (Borrelia burgdorferi).